We begin with the raw amino-acid sequence, 269 residues long: Formamidopyrimidine-DNA glycosylase (269 aa).

P2 (schiff-base intermediate with DNA) is an active-site residue. The Proton donor role is filled by E3. K57 serves as the catalytic Proton donor; for beta-elimination activity. DNA contacts are provided by H90, R109, and K150. The FPG-type zinc finger occupies 235–269 (QVYGRKGEPCRVCGTPIVASKHAQRATFYCRQCQK). Residue R259 is the Proton donor; for delta-elimination activity of the active site.

It belongs to the FPG family. As to quaternary structure, monomer. Requires Zn(2+) as cofactor.

The catalysed reaction is Hydrolysis of DNA containing ring-opened 7-methylguanine residues, releasing 2,6-diamino-4-hydroxy-5-(N-methyl)formamidopyrimidine.. The enzyme catalyses 2'-deoxyribonucleotide-(2'-deoxyribose 5'-phosphate)-2'-deoxyribonucleotide-DNA = a 3'-end 2'-deoxyribonucleotide-(2,3-dehydro-2,3-deoxyribose 5'-phosphate)-DNA + a 5'-end 5'-phospho-2'-deoxyribonucleoside-DNA + H(+). In terms of biological role, involved in base excision repair of DNA damaged by oxidation or by mutagenic agents. Acts as a DNA glycosylase that recognizes and removes damaged bases. Has a preference for oxidized purines, such as 7,8-dihydro-8-oxoguanine (8-oxoG). Has AP (apurinic/apyrimidinic) lyase activity and introduces nicks in the DNA strand. Cleaves the DNA backbone by beta-delta elimination to generate a single-strand break at the site of the removed base with both 3'- and 5'-phosphates. The sequence is that of Formamidopyrimidine-DNA glycosylase from Enterobacter sp. (strain 638).